The chain runs to 406 residues: Dual-specificity RNA methyltransferase RlmN (406 aa).

Glu121 acts as the Proton acceptor in catalysis. The 251-residue stretch at 127 to 377 (ERDRGTLCVS…VRTPRGRDIL (251 aa)) folds into the Radical SAM core domain. A disulfide bond links Cys134 and Cys380. Residues Cys141, Cys145, and Cys148 each contribute to the [4Fe-4S] cluster site. S-adenosyl-L-methionine contacts are provided by residues 206 to 207 (GE), Ser238, 260 to 262 (SLH), and Asn337. Catalysis depends on Cys380, which acts as the S-methylcysteine intermediate.

The protein belongs to the radical SAM superfamily. RlmN family. It depends on [4Fe-4S] cluster as a cofactor.

Its subcellular location is the cytoplasm. The enzyme catalyses adenosine(2503) in 23S rRNA + 2 reduced [2Fe-2S]-[ferredoxin] + 2 S-adenosyl-L-methionine = 2-methyladenosine(2503) in 23S rRNA + 5'-deoxyadenosine + L-methionine + 2 oxidized [2Fe-2S]-[ferredoxin] + S-adenosyl-L-homocysteine. The catalysed reaction is adenosine(37) in tRNA + 2 reduced [2Fe-2S]-[ferredoxin] + 2 S-adenosyl-L-methionine = 2-methyladenosine(37) in tRNA + 5'-deoxyadenosine + L-methionine + 2 oxidized [2Fe-2S]-[ferredoxin] + S-adenosyl-L-homocysteine. Functionally, specifically methylates position 2 of adenine 2503 in 23S rRNA and position 2 of adenine 37 in tRNAs. m2A2503 modification seems to play a crucial role in the proofreading step occurring at the peptidyl transferase center and thus would serve to optimize ribosomal fidelity. The polypeptide is Dual-specificity RNA methyltransferase RlmN (Azorhizobium caulinodans (strain ATCC 43989 / DSM 5975 / JCM 20966 / LMG 6465 / NBRC 14845 / NCIMB 13405 / ORS 571)).